The chain runs to 155 residues: MPKGTGKVIAQNKKAFHDYFIEETYEAGLVLQGTEIKSIRAGRVNLKDAFARIHNGEVWVHNMHINTYEQGNRFNHDPLRTRKLLLHKKEIDKLAGAAKETGYALVPLRIYLKNGFAKMALGLAKGKKQYDKRHDLKEKEAKREIARVFRDRQKM.

The protein belongs to the SmpB family.

The protein resides in the cytoplasm. Its function is as follows. Required for rescue of stalled ribosomes mediated by trans-translation. Binds to transfer-messenger RNA (tmRNA), required for stable association of tmRNA with ribosomes. tmRNA and SmpB together mimic tRNA shape, replacing the anticodon stem-loop with SmpB. tmRNA is encoded by the ssrA gene; the 2 termini fold to resemble tRNA(Ala) and it encodes a 'tag peptide', a short internal open reading frame. During trans-translation Ala-aminoacylated tmRNA acts like a tRNA, entering the A-site of stalled ribosomes, displacing the stalled mRNA. The ribosome then switches to translate the ORF on the tmRNA; the nascent peptide is terminated with the 'tag peptide' encoded by the tmRNA and targeted for degradation. The ribosome is freed to recommence translation, which seems to be the essential function of trans-translation. The polypeptide is SsrA-binding protein (Bacillus cereus (strain G9842)).